A 707-amino-acid polypeptide reads, in one-letter code: Complement C1r-A subcomponent (707 aa).

The first 16 residues, 1 to 16 (MWLFALLVTLFYGVEG), serve as a signal peptide directing secretion. One can recognise a CUB 1 domain in the interval 17-140 (SIYLPQKLYG…KGFLAYYQAV (124 aa)). 3 residues coordinate Ca(2+): Glu65, Asp73, and Asp118. Residues Cys70 and Cys88 are joined by a disulfide bond. Asn124 carries N-linked (GlcNAc...) asparagine glycosylation. The Ca(2+) site is built by Asp141, Leu142, and Glu144. The 49-residue stretch at 141–189 (DLDECASQPNSVEEGLQPRCQHLCHNYVGGYFCSCHPGYELQKDGQSCQ) folds into the EGF-like; calcium-binding domain. 4 cysteine pairs are disulfide-bonded: Cys145-Cys164, Cys160-Cys173, Cys175-Cys188, and Cys192-Cys219. Residues Asn166, Tyr167, and Gly170 each coordinate Ca(2+). Asn166 carries the post-translational modification (3R)-3-hydroxyasparagine. The 113-residue stretch at 192-304 (CSSELYTEPS…RGWKLHYTTE (113 aa)) folds into the CUB 2 domain. Ser205 carries the post-translational modification Phosphoserine; by CK2. Residue Asn220 is glycosylated (N-linked (GlcNAc...) asparagine). Ca(2+) is bound by residues Asp242, Asp252, Asp289, and Asp293. Cysteines 249 and 267 form a disulfide. 2 consecutive Sushi domains span residues 306-372 (IKCP…RCKI) and 373-448 (KNCG…RCLP). Cystine bridges form between Cys308–Cys357, Cys337–Cys370, Cys375–Cys428, Cys405–Cys446, and Cys450–Cys579. The 242-residue stretch at 463–704 (IIRGQPARPG…YVDWIKKEMG (242 aa)) folds into the Peptidase S1 domain. Catalysis depends on charge relay system residues His501 and Asp559. An N-linked (GlcNAc...) asparagine glycan is attached at Asn583. 2 disulfides stabilise this stretch: Cys622–Cys641 and Cys652–Cys682. Ser656 acts as the Charge relay system in catalysis.

The protein belongs to the peptidase S1 family. In terms of assembly, core component of the complement C1 complex, a calcium-dependent complex composed of 1 molecule of the C1Q subcomplex, 2 molecules of C1R and 2 molecules of C1S. The C1Q subcomplex is composed 18 subunits: 3 chains of C1QA, C1QB, and C1QC trimerize to form 6 collagen-like triple helices connected to six globular ligand-recognition modules. Within the C1 complex, C1R is a dimer of identical chains, each of which is activated by cleavage into two chains, heavy and light, connected by disulfide bonds. Post-translationally, cleaved and activated by autocatalytic processing to generate Complement C1r subcomponent heavy and light chains that are connected by disulfide bonds. In terms of processing, the iron and 2-oxoglutarate dependent 3-hydroxylation of aspartate and asparagine is (R) stereospecific within EGF domains.

Its subcellular location is the secreted. The protein resides in the cell surface. It catalyses the reaction Selective cleavage of Lys(or Arg)-|-Ile bond in complement subcomponent C1s to form the active form of C1s (EC 3.4.21.42).. Activated by the C1Q subcomplex of the C1 complex following C1Q binding to immunoglobulins (IgG or IgM) complexed with antigens to form antigen-antibody complexes on the surface of pathogens. Immunoglobulin-binding promotes autoactivation of C1R, which results in the cleavage of the Arg-Ile bond in the catalytic domain. Functionally, serine protease component of the complement C1 complex, a multiprotein complex that initiates the classical pathway of the complement system, a cascade of proteins that leads to phagocytosis and breakdown of pathogens and signaling that strengthens the adaptive immune system. C1R catalyzes the first enzymatic step in the classical complement pathway: it is activated by the C1Q subcomplex of the C1 complex, which associates with IgG or IgM immunoglobulins complexed with antigens to form antigen-antibody complexes on the surface of pathogens. Immunoglobulin-binding promotes the autocatalytic cleavage and activation of C1R. Activated C1R then cleaves and activates C1S, the second protease of the classical complement pathway. It is unclear if C1R activates C1S within single, strained C1 complexes or between neighboring C1 complexes on surfaces. The sequence is that of Complement C1r-A subcomponent (C1ra) from Mus musculus (Mouse).